Reading from the N-terminus, the 488-residue chain is Cobyric acid synthase (488 aa).

The GATase cobBQ-type domain occupies 252-442 (RTRICVPILP…VHGLFASDAF (191 aa)). Cysteine 334 functions as the Nucleophile in the catalytic mechanism. Residue histidine 434 is part of the active site.

This sequence belongs to the CobB/CobQ family. CobQ subfamily.

Its pathway is cofactor biosynthesis; adenosylcobalamin biosynthesis. Catalyzes amidations at positions B, D, E, and G on adenosylcobyrinic A,C-diamide. NH(2) groups are provided by glutamine, and one molecule of ATP is hydrogenolyzed for each amidation. The sequence is that of Cobyric acid synthase from Xanthobacter autotrophicus (strain ATCC BAA-1158 / Py2).